The primary structure comprises 119 residues: UPF0231 protein YPTB0717 (119 aa).

This sequence belongs to the UPF0231 family.

The polypeptide is UPF0231 protein YPTB0717 (Yersinia pseudotuberculosis serotype I (strain IP32953)).